Consider the following 138-residue polypeptide: Transcriptional regulator MraZ (138 aa).

SpoVT-AbrB domains follow at residues 3 to 45 (EFQH…PLAE) and 74 to 117 (ATEC…AAER).

Belongs to the MraZ family. As to quaternary structure, forms oligomers.

It localises to the cytoplasm. The protein resides in the nucleoid. This is Transcriptional regulator MraZ from Symbiobacterium thermophilum (strain DSM 24528 / JCM 14929 / IAM 14863 / T).